The chain runs to 154 residues: 6,7-dimethyl-8-ribityllumazine synthase (154 aa).

Residues F22, 56–58 (AFE), and 80–82 (AVI) each bind 5-amino-6-(D-ribitylamino)uracil. 85–86 (AT) lines the (2S)-2-hydroxy-3-oxobutyl phosphate pocket. H88 (proton donor) is an active-site residue. 5-amino-6-(D-ribitylamino)uracil is bound at residue F113. R127 lines the (2S)-2-hydroxy-3-oxobutyl phosphate pocket.

This sequence belongs to the DMRL synthase family.

The enzyme catalyses (2S)-2-hydroxy-3-oxobutyl phosphate + 5-amino-6-(D-ribitylamino)uracil = 6,7-dimethyl-8-(1-D-ribityl)lumazine + phosphate + 2 H2O + H(+). It participates in cofactor biosynthesis; riboflavin biosynthesis; riboflavin from 2-hydroxy-3-oxobutyl phosphate and 5-amino-6-(D-ribitylamino)uracil: step 1/2. Functionally, catalyzes the formation of 6,7-dimethyl-8-ribityllumazine by condensation of 5-amino-6-(D-ribitylamino)uracil with 3,4-dihydroxy-2-butanone 4-phosphate. This is the penultimate step in the biosynthesis of riboflavin. The protein is 6,7-dimethyl-8-ribityllumazine synthase of Syntrophobacter fumaroxidans (strain DSM 10017 / MPOB).